Reading from the N-terminus, the 285-residue chain is uncharacterized protein (285 aa).

Residues 197 to 217 form a helical membrane-spanning segment; it reads PTIGALLSLVSAFFSFIPFLM.

The protein resides in the membrane. This is an uncharacterized protein from Saccharomyces cerevisiae (strain ATCC 204508 / S288c) (Baker's yeast).